The primary structure comprises 178 residues: Ribulose bisphosphate carboxylase small subunit, chloroplastic (178 aa).

A chloroplast-targeting transit peptide spans 1–54 (MALISSAAVTTINRAPVQANLATPFTGLKSSAGFPVTKKNNDITSITSNGSRVN).

Belongs to the RuBisCO small chain family. As to quaternary structure, heterohexadecamer of 8 large and 8 small subunits.

The protein localises to the plastid. Its subcellular location is the chloroplast. Its function is as follows. RuBisCO catalyzes two reactions: the carboxylation of D-ribulose 1,5-bisphosphate, the primary event in carbon dioxide fixation, as well as the oxidative fragmentation of the pentose substrate. Both reactions occur simultaneously and in competition at the same active site. Although the small subunit is not catalytic it is essential for maximal activity. In Trifolium repens (Creeping white clover), this protein is Ribulose bisphosphate carboxylase small subunit, chloroplastic.